A 489-amino-acid polypeptide reads, in one-letter code: Adenylosuccinate synthetase 2, chloroplastic (489 aa).

The N-terminal 45 residues, 1–45 (MPFSPPCLDPAAAAAASLSFLPAAAARPPAPCAVAPRSRRALRVA), are a transit peptide targeting the chloroplast. GTP contacts are provided by residues 76 to 82 (GDEGKGK) and 104 to 106 (GHT). The active-site Proton acceptor is the Asp77. Residues Asp77 and Gly104 each contribute to the Mg(2+) site. Residues 77-80 (DEGK), 102-105 (NAGH), Thr194, Arg208, Gln288, Thr303, and Arg367 each bind IMP. Residue His105 is the Proton donor of the active site. Position 363–369 (363–369 (TTTGRPR)) interacts with substrate. GTP contacts are provided by residues Arg369, 395-397 (KLD), and 478-480 (GVG).

Belongs to the adenylosuccinate synthetase family. As to quaternary structure, homodimer. It depends on Mg(2+) as a cofactor.

The protein localises to the plastid. The protein resides in the chloroplast. The catalysed reaction is IMP + L-aspartate + GTP = N(6)-(1,2-dicarboxyethyl)-AMP + GDP + phosphate + 2 H(+). It functions in the pathway purine metabolism; AMP biosynthesis via de novo pathway; AMP from IMP: step 1/2. Functionally, plays an important role in the de novo pathway and in the salvage pathway of purine nucleotide biosynthesis. Catalyzes the first committed step in the biosynthesis of AMP from IMP. The sequence is that of Adenylosuccinate synthetase 2, chloroplastic from Oryza sativa subsp. japonica (Rice).